The chain runs to 324 residues: MYQGKGTYLENYLDSISTLPSELGRNFALIRELDYRTSDLVEKIEKLKSNLLVTTNGTRRAVHELTDERASKHIKLEMKQVIEYSDEKVELSNQTYELIDKHIRKLDIDLKKFETELESAEEEKKKKKSKQSQNNSTVESSTTSSSSSSSSSSLSLSSSTNNTSSLNSSSGGGGGGSGGGGGGGGHSSHSTGNKKGKARDSLTSSSSSGNINGMSSSSSSSSSSSSLSSRKQKSMAAQDIASITGNNGDADVRVFNANPNDLDLAIDPNEPTYCFCNRVSFGEMVGCENPDCKIEWFHFECVGLTSTPKGKWYCPDCTRIKVKK.

The segment at 120–237 is disordered; that stretch reads AEEEKKKKKS…SSRKQKSMAA (118 aa). Over residues 140 to 169 the composition is skewed to low complexity; that stretch reads SSTTSSSSSSSSSSLSLSSSTNNTSSLNSS. The segment covering 170 to 186 has biased composition (gly residues); sequence SGGGGGGSGGGGGGGGH. Residues 201-229 show a composition bias toward low complexity; sequence SLTSSSSSGNINGMSSSSSSSSSSSSLSS. Residues 271 to 320 form a PHD-type zinc finger; sequence PTYCFCNRVSFGEMVGCENPDCKIEWFHFECVGLTSTPKGKWYCPDCTRI. Positions 274, 276, 287, 292, 298, 301, 314, and 317 each coordinate Zn(2+).

Belongs to the ING family. As to quaternary structure, interacts with H3K4me3 and to a lesser extent with H3K4me2.

It is found in the nucleus. In terms of biological role, involved in regulation of the growth and differentiation transition (GDT) process, probably by regulating gene expression via histone modification. In Dictyostelium discoideum (Social amoeba), this protein is Inhibitor of growth protein 1 homolog.